A 447-amino-acid chain; its full sequence is Voltage-gated purine nucleotide uniporter SLC17A9 (447 aa).

The disordered stretch occupies residues 1 to 26 (MPSQRSSLMQPIPEETRKTPSAAAED). A compositionally biased stretch (basic and acidic residues) spans 14 to 26 (EETRKTPSAAAED). 11 helical membrane-spanning segments follow: residues 36-58 (LWTG…MPVC), 74-94 (GIVL…GGHL), 103-123 (VILL…LLAH), 129-149 (LAFV…YFPA), 169-189 (TVGA…SVLL), 197-217 (VFYF…KYLL), 252-272 (VWAV…LLSW), 287-307 (WVFN…SGFI), 327-347 (VMGL…TSFL), 380-400 (GFLF…GVCL), and 413-433 (CVFH…LVFG).

This sequence belongs to the major facilitator superfamily. Sodium/anion cotransporter family.

It is found in the cytoplasmic vesicle. Its subcellular location is the secretory vesicle. The protein resides in the chromaffin granule membrane. The protein localises to the secretory vesicle membrane. It localises to the lysosome membrane. It carries out the reaction ATP(in) = ATP(out). It catalyses the reaction ADP(in) = ADP(out). The enzyme catalyses GTP(in) = GTP(out). Its activity is regulated as follows. Activity is chloride-dependent. Its function is as follows. Voltage-gated ATP nucleotide uniporter that can also transport the purine nucleotides ADP and GTP. Uses the membrane potential as the driving force to control ATP accumulation in lysosomes and secretory vesicles. By controlling ATP storage in lysosomes, regulates ATP-dependent proteins of these organelles. Also indirectly regulates the exocytosis of ATP through its import into lysosomes in astrocytes and secretory vesicles such as adrenal chromaffin granules, mucin granules and synaptic vesicles. The protein is Voltage-gated purine nucleotide uniporter SLC17A9 of Rattus norvegicus (Rat).